The chain runs to 121 residues: Small ribosomal subunit protein bS6 (121 aa).

It belongs to the bacterial ribosomal protein bS6 family.

Functionally, binds together with bS18 to 16S ribosomal RNA. The protein is Small ribosomal subunit protein bS6 of Pelagibacter ubique (strain HTCC1062).